Reading from the N-terminus, the 223-residue chain is Chalcone--flavanone isomerase 2 (223 aa).

Substrate-binding residues include Thr-41, Asn-106, and Ser-183.

It belongs to the chalcone isomerase family.

It catalyses the reaction a chalcone = a flavanone.. It functions in the pathway secondary metabolite biosynthesis; flavonoid biosynthesis. Catalyzes the intramolecular cyclization of bicyclic chalcones into tricyclic (S)-flavanones. Responsible for the isomerization of 4,2',4',6'-tetrahydroxychalcone (also termed chalcone) into naringenin. This is Chalcone--flavanone isomerase 2 (CHI2) from Arabidopsis thaliana (Mouse-ear cress).